A 91-amino-acid chain; its full sequence is Hepcidin-1 (91 aa).

The first 24 residues, 1–24 (MKLSNVFLAAVVILTCVCVFQITA), serve as a signal peptide directing secretion. The propeptide occupies 25-64 (VPFIQQVQDEHHVESEELQENQHLTEAEHRQTDPLVLFRT). 4 cysteine pairs are disulfide-bonded: Cys-73/Cys-89, Cys-76/Cys-79, Cys-77/Cys-85, and Cys-80/Cys-88.

Belongs to the hepcidin family.

It is found in the secreted. Its function is as follows. Seems to act as a signaling molecule involved in the maintenance of iron homeostasis. Seems to be required in conjunction with HFE to regulate both intestinal iron absorption and iron storage in macrophages. May also have antimicrobial activity. The sequence is that of Hepcidin-1 (hamp1) from Danio rerio (Zebrafish).